A 596-amino-acid chain; its full sequence is NADH-quinone oxidoreductase subunit C/D (596 aa).

The segment at 1–186 (MMNDNKYIHI…PAFTLTRKKE (186 aa)) is NADH dehydrogenase I subunit C. Residues 210–596 (DFMFLNLGPN…IDFVMSDVDR (387 aa)) are NADH dehydrogenase I subunit D.

The protein in the N-terminal section; belongs to the complex I 30 kDa subunit family. This sequence in the C-terminal section; belongs to the complex I 49 kDa subunit family. As to quaternary structure, NDH-1 is composed of 13 different subunits. Subunits NuoB, CD, E, F, and G constitute the peripheral sector of the complex.

It is found in the cell inner membrane. It carries out the reaction a quinone + NADH + 5 H(+)(in) = a quinol + NAD(+) + 4 H(+)(out). Its function is as follows. NDH-1 shuttles electrons from NADH, via FMN and iron-sulfur (Fe-S) centers, to quinones in the respiratory chain. The immediate electron acceptor for the enzyme in this species is believed to be ubiquinone. Couples the redox reaction to proton translocation (for every two electrons transferred, four hydrogen ions are translocated across the cytoplasmic membrane), and thus conserves the redox energy in a proton gradient. In Blochmanniella floridana, this protein is NADH-quinone oxidoreductase subunit C/D.